Reading from the N-terminus, the 569-residue chain is Urease subunit alpha (569 aa).

One can recognise a Urease domain in the interval 131 to 569; the sequence is GSIDTHIHFI…VPMAQRYFLL (439 aa). Residues His-136, His-138, and Lys-219 each contribute to the Ni(2+) site. Position 219 is an N6-carboxylysine (Lys-219). His-221 is a binding site for substrate. Ni(2+) contacts are provided by His-248 and His-274. His-322 (proton donor) is an active-site residue. Asp-362 lines the Ni(2+) pocket.

It belongs to the metallo-dependent hydrolases superfamily. Urease alpha subunit family. As to quaternary structure, heterotrimer of UreA (gamma), UreB (beta) and UreC (alpha) subunits. Three heterotrimers associate to form the active enzyme. Requires Ni cation as cofactor. In terms of processing, carboxylation allows a single lysine to coordinate two nickel ions.

It localises to the cytoplasm. The catalysed reaction is urea + 2 H2O + H(+) = hydrogencarbonate + 2 NH4(+). It participates in nitrogen metabolism; urea degradation; CO(2) and NH(3) from urea (urease route): step 1/1. The protein is Urease subunit alpha of Prochlorococcus marinus (strain MIT 9301).